We begin with the raw amino-acid sequence, 142 residues long: Type IV pilus subunit protein TapA (142 aa).

A propeptide spans 1 to 6 (MKKQSG) (leader sequence). Residue phenylalanine 7 is modified to N-methylphenylalanine. A helical membrane pass occupies residues 7–27 (FTLIELMIVVAIVAILAAIAL).

The protein belongs to the N-Me-Phe pilin family.

It is found in the membrane. Its function is as follows. Major component of the type IV (TAP) pilus. Aeromonas hydrophila possesses two distinct families of type IV pili: the bundle-forming pilus (Bfp) and the type IV pilus (Tap). In Aeromonas hydrophila, this protein is Type IV pilus subunit protein TapA (tapA).